The sequence spans 114 residues: Large ribosomal subunit protein bL19 (114 aa).

The protein belongs to the bacterial ribosomal protein bL19 family.

In terms of biological role, this protein is located at the 30S-50S ribosomal subunit interface and may play a role in the structure and function of the aminoacyl-tRNA binding site. This chain is Large ribosomal subunit protein bL19, found in Clostridium botulinum (strain Loch Maree / Type A3).